Here is a 123-residue protein sequence, read N- to C-terminus: Large ribosomal subunit protein bL17 (123 aa).

The protein belongs to the bacterial ribosomal protein bL17 family. Part of the 50S ribosomal subunit. Contacts protein L32.

The sequence is that of Large ribosomal subunit protein bL17 from Mycoplasma genitalium (strain ATCC 33530 / DSM 19775 / NCTC 10195 / G37) (Mycoplasmoides genitalium).